The primary structure comprises 129 residues: Small ribosomal subunit protein uS11 (129 aa).

Belongs to the universal ribosomal protein uS11 family. Part of the 30S ribosomal subunit. Interacts with proteins S7 and S18. Binds to IF-3.

In terms of biological role, located on the platform of the 30S subunit, it bridges several disparate RNA helices of the 16S rRNA. Forms part of the Shine-Dalgarno cleft in the 70S ribosome. In Methylobacillus flagellatus (strain ATCC 51484 / DSM 6875 / VKM B-1610 / KT), this protein is Small ribosomal subunit protein uS11.